Consider the following 273-residue polypeptide: Large ribosomal subunit protein uL2 (273 aa).

Positions 228-273 are disordered; it reads VDHPHGGGEGKTSGGRHPVTPWGFSTKGKKTRKNKRTSKFIVKKRK. The span at 254 to 273 shows a compositional bias: basic residues; that stretch reads KGKKTRKNKRTSKFIVKKRK.

It belongs to the universal ribosomal protein uL2 family. Part of the 50S ribosomal subunit. Forms a bridge to the 30S subunit in the 70S ribosome.

One of the primary rRNA binding proteins. Required for association of the 30S and 50S subunits to form the 70S ribosome, for tRNA binding and peptide bond formation. It has been suggested to have peptidyltransferase activity; this is somewhat controversial. Makes several contacts with the 16S rRNA in the 70S ribosome. In Rickettsia prowazekii (strain Madrid E), this protein is Large ribosomal subunit protein uL2.